A 645-amino-acid polypeptide reads, in one-letter code: UPF0313 protein CLK_3381 (645 aa).

The 272-residue stretch at 295-566 folds into the Radical SAM core domain; that stretch reads AIKEVKFSIT…RMQRALLQFS (272 aa). The [4Fe-4S] cluster site is built by cysteine 309, cysteine 313, and cysteine 316. Residues 598 to 645 form a disordered region; sequence NKPYKKSHKKNNVKNNNNHYNKNNNYNKNKDVSKKNKKNSLSKHKKRK. Basic residues predominate over residues 600-609; it reads PYKKSHKKNN. Residues 610 to 624 are compositionally biased toward low complexity; the sequence is VKNNNNHYNKNNNYN. The span at 632–645 shows a compositional bias: basic residues; it reads KNKKNSLSKHKKRK.

This sequence belongs to the UPF0313 family. Requires [4Fe-4S] cluster as cofactor.

This chain is UPF0313 protein CLK_3381, found in Clostridium botulinum (strain Loch Maree / Type A3).